A 106-amino-acid polypeptide reads, in one-letter code: Iron-sulfur cluster assembly protein CyaY (106 aa).

This sequence belongs to the frataxin family.

Its function is as follows. Involved in iron-sulfur (Fe-S) cluster assembly. May act as a regulator of Fe-S biogenesis. This Yersinia enterocolitica serotype O:8 / biotype 1B (strain NCTC 13174 / 8081) protein is Iron-sulfur cluster assembly protein CyaY.